A 291-amino-acid polypeptide reads, in one-letter code: Phosphatidylglycerol--prolipoprotein diacylglyceryl transferase (291 aa).

The next 7 helical transmembrane spans lie at 21–41 (VALH…MWLA), 60–80 (LLYA…VLFY), 96–116 (WDGG…MIIF), 130–150 (FIAP…FING), 198–218 (SQLY…NLFI), 225–245 (GAVS…VEFF), and 260–280 (ISMG…MMVW). R143 is an a 1,2-diacyl-sn-glycero-3-phospho-(1'-sn-glycerol) binding site.

This sequence belongs to the Lgt family.

Its subcellular location is the cell inner membrane. The enzyme catalyses L-cysteinyl-[prolipoprotein] + a 1,2-diacyl-sn-glycero-3-phospho-(1'-sn-glycerol) = an S-1,2-diacyl-sn-glyceryl-L-cysteinyl-[prolipoprotein] + sn-glycerol 1-phosphate + H(+). It participates in protein modification; lipoprotein biosynthesis (diacylglyceryl transfer). Functionally, catalyzes the transfer of the diacylglyceryl group from phosphatidylglycerol to the sulfhydryl group of the N-terminal cysteine of a prolipoprotein, the first step in the formation of mature lipoproteins. This Salmonella newport (strain SL254) protein is Phosphatidylglycerol--prolipoprotein diacylglyceryl transferase.